The chain runs to 140 residues: ATP synthase epsilon chain (140 aa).

It belongs to the ATPase epsilon chain family. As to quaternary structure, F-type ATPases have 2 components, CF(1) - the catalytic core - and CF(0) - the membrane proton channel. CF(1) has five subunits: alpha(3), beta(3), gamma(1), delta(1), epsilon(1). CF(0) has three main subunits: a, b and c.

The protein resides in the cell membrane. Functionally, produces ATP from ADP in the presence of a proton gradient across the membrane. This is ATP synthase epsilon chain from Baumannia cicadellinicola subsp. Homalodisca coagulata.